The sequence spans 486 residues: Putative ankyrin repeat protein R634 (486 aa).

ANK repeat units follow at residues 84-113 (DLFK…NVRE), 114-143 (HNDV…DLYA), 145-173 (KNTL…NFRE), 174-203 (NCDT…DVNS), 205-233 (SHKS…NIDW), 234-263 (RHNY…NLEI), 265-293 (DGCI…EIGF), 307-336 (NKIT…ATIK), 337-366 (EKNY…SLEK), 367-396 (KINK…NVKT), 398-426 (EGLP…DVTS), and 427-456 (YDNY…NVND).

The chain is Putative ankyrin repeat protein R634 from Acanthamoeba polyphaga (Amoeba).